We begin with the raw amino-acid sequence, 451 residues long: Phosphoglucosamine mutase (451 aa).

Catalysis depends on S101, which acts as the Phosphoserine intermediate. The Mg(2+) site is built by S101, D242, D244, and D246. At S101 the chain carries Phosphoserine.

It belongs to the phosphohexose mutase family. Requires Mg(2+) as cofactor. Activated by phosphorylation.

The catalysed reaction is alpha-D-glucosamine 1-phosphate = D-glucosamine 6-phosphate. In terms of biological role, catalyzes the conversion of glucosamine-6-phosphate to glucosamine-1-phosphate. This Beijerinckia indica subsp. indica (strain ATCC 9039 / DSM 1715 / NCIMB 8712) protein is Phosphoglucosamine mutase.